A 437-amino-acid chain; its full sequence is Trigger factor (437 aa).

The 86-residue stretch at 163 to 248 (SDRVIIDFEG…LNNVSEATLP (86 aa)) folds into the PPIase FKBP-type domain.

This sequence belongs to the FKBP-type PPIase family. Tig subfamily.

Its subcellular location is the cytoplasm. The enzyme catalyses [protein]-peptidylproline (omega=180) = [protein]-peptidylproline (omega=0). Functionally, involved in protein export. Acts as a chaperone by maintaining the newly synthesized protein in an open conformation. Functions as a peptidyl-prolyl cis-trans isomerase. This chain is Trigger factor, found in Neisseria meningitidis serogroup C / serotype 2a (strain ATCC 700532 / DSM 15464 / FAM18).